A 377-amino-acid chain; its full sequence is Histone deacetylase 8 (377 aa).

The histone deacetylase stretch occupies residues 14–324 (LPPVYIYSPE…WTYLTGVILG (311 aa)). S39 carries the post-translational modification Phosphoserine. D101 serves as a coordination point for substrate. The active-site Proton acceptor is H143. Residue G151 participates in substrate binding. Residues D178, H180, and D267 each coordinate a divalent metal cation. Residue Y306 coordinates substrate.

It belongs to the histone deacetylase family. HD type 1 subfamily. As to quaternary structure, interacts with CBFA2T3. Interacts with phosphorylated SMG5/EST1B; this interaction protects SMG5 from ubiquitin-mediated degradation. Associates with alpha-SMA (smooth muscle alpha-actin). Requires a divalent metal cation as cofactor. In terms of processing, phosphorylated by PKA on serine 39. Phosphorylation reduces deacetylase activity observed preferentially on histones H3 and H4.

Its subcellular location is the nucleus. The protein resides in the chromosome. The protein localises to the cytoplasm. It catalyses the reaction N(6)-acetyl-L-lysyl-[histone] + H2O = L-lysyl-[histone] + acetate. It carries out the reaction N(6)-acetyl-L-lysyl-[protein] + H2O = L-lysyl-[protein] + acetate. The catalysed reaction is N(6)-(2E)-butenoyl-L-lysyl-[protein] + H2O = (2E)-2-butenoate + L-lysyl-[protein]. Its activity is inhibited by trichostatin A (TSA) and butyrate, 2 well known histone deacetylase inhibitors. In terms of biological role, histone deacetylase that catalyzes the deacetylation of lysine residues on the N-terminal part of the core histones (H2A, H2B, H3 and H4). Histone deacetylation gives a tag for epigenetic repression and plays an important role in transcriptional regulation, cell cycle progression and developmental events. Histone deacetylases act via the formation of large multiprotein complexes. Also involved in the deacetylation of cohesin complex protein SMC3 regulating release of cohesin complexes from chromatin. May play a role in smooth muscle cell contractility. In addition to protein deacetylase activity, also has protein-lysine deacylase activity: acts as a protein decrotonylase by mediating decrotonylation ((2E)-butenoyl) of histones. In Rattus norvegicus (Rat), this protein is Histone deacetylase 8 (Hdac8).